A 286-amino-acid polypeptide reads, in one-letter code: Ribonuclease Z (286 aa).

Zn(2+) is bound by residues His61, His63, Asp65, His66, His153, Asp176, and His240. The Proton acceptor role is filled by Asp65.

Belongs to the RNase Z family. In terms of assembly, homodimer. Zn(2+) is required as a cofactor.

It carries out the reaction Endonucleolytic cleavage of RNA, removing extra 3' nucleotides from tRNA precursor, generating 3' termini of tRNAs. A 3'-hydroxy group is left at the tRNA terminus and a 5'-phosphoryl group is left at the trailer molecule.. Functionally, zinc phosphodiesterase, which displays some tRNA 3'-processing endonuclease activity. Probably involved in tRNA maturation, by removing a 3'-trailer from precursor tRNA. The protein is Ribonuclease Z of Mycolicibacterium gilvum (strain PYR-GCK) (Mycobacterium gilvum (strain PYR-GCK)).